The primary structure comprises 203 residues: Large ribosomal subunit protein eL15 (203 aa).

Residues 166–203 are disordered; that stretch reads ATGKKSRGINKGHRYNNTRSGRRHTWKRQNTQSYWRYR. Over residues 169–192 the composition is skewed to basic residues; the sequence is KKSRGINKGHRYNNTRSGRRHTWK. A compositionally biased stretch (polar residues) spans 193–203; the sequence is RQNTQSYWRYR.

This sequence belongs to the eukaryotic ribosomal protein eL15 family.

In Aspergillus niger, this protein is Large ribosomal subunit protein eL15 (rpl15).